The chain runs to 181 residues: Ribosome maturation factor RimM (181 aa).

In terms of domain architecture, PRC barrel spans 100 to 177 (EEGFYWMQLI…QIQVDWQLED (78 aa)).

Belongs to the RimM family. In terms of assembly, binds ribosomal protein uS19.

It localises to the cytoplasm. An accessory protein needed during the final step in the assembly of 30S ribosomal subunit, possibly for assembly of the head region. Essential for efficient processing of 16S rRNA. May be needed both before and after RbfA during the maturation of 16S rRNA. It has affinity for free ribosomal 30S subunits but not for 70S ribosomes. In Hydrogenovibrio crunogenus (strain DSM 25203 / XCL-2) (Thiomicrospira crunogena), this protein is Ribosome maturation factor RimM.